Here is a 449-residue protein sequence, read N- to C-terminus: Tubulin alpha-2 chain (449 aa).

Q11 is a binding site for GTP. K40 is modified (N6-acetyllysine). GTP-binding residues include S140, G144, T145, T179, N206, and N228. The active site involves E254.

The protein belongs to the tubulin family. As to quaternary structure, dimer of alpha and beta chains. A typical microtubule is a hollow water-filled tube with an outer diameter of 25 nm and an inner diameter of 15 nM. Alpha-beta heterodimers associate head-to-tail to form protofilaments running lengthwise along the microtubule wall with the beta-tubulin subunit facing the microtubule plus end conferring a structural polarity. Microtubules usually have 13 protofilaments but different protofilament numbers can be found in some organisms and specialized cells. In terms of processing, acetylation of alpha chains at Lys-40 stabilizes microtubules and affects affinity and processivity of microtubule motors. This modification has a role in multiple cellular functions, ranging from cell motility, cell cycle progression or cell differentiation to intracellular trafficking and signaling.

It localises to the cytoplasm. The protein resides in the cytoskeleton. The enzyme catalyses GTP + H2O = GDP + phosphate + H(+). Functionally, tubulin is the major constituent of microtubules, a cylinder consisting of laterally associated linear protofilaments composed of alpha- and beta-tubulin heterodimers. Microtubules grow by the addition of GTP-tubulin dimers to the microtubule end, where a stabilizing cap forms. Below the cap, tubulin dimers are in GDP-bound state, owing to GTPase activity of alpha-tubulin. The polypeptide is Tubulin alpha-2 chain (Stylonychia lemnae (Ciliate)).